The sequence spans 236 residues: MTKQLKLSALFVALLASGTAVAGEASVQGYTVSGQSNEIVRNNYGECWKNAYFDKASQGRVECGDAVAVPEPEPAPVAVVEQAPQYVDETISLSAKTLFGFDKDSLRAEAQDNLKVLAQRLSRTNVQSVRVEGHTDFMGSEKYNQALSERRAYVVANNLVSNGVPASRISAVGLGESQAQMTQVCQAEVAKLGAKASKAKKREALIACIEPDRRVDVKIRSIVTRQVVPARNHHQH.

Residues 1-22 (MTKQLKLSALFVALLASGTAVA) form the signal peptide. 4 consecutive repeat copies span residues 69–70 (VP), 71–72 (EP), 73–74 (EP), and 75–76 (AP). Residues 69–76 (VPEPEPAP) are 4 X 2 AA tandem repeats of X-P. The 138-residue stretch at 86–223 (YVDETISLSA…RVDVKIRSIV (138 aa)) folds into the OmpA-like domain. Cys185 and Cys208 are disulfide-bonded.

This sequence belongs to the outer membrane OOP (TC 1.B.6) superfamily.

The protein localises to the cell outer membrane. The chain is Outer membrane protein P.III from Neisseria gonorrhoeae.